The primary structure comprises 512 residues: tRNA-2-methylthio-N(6)-dimethylallyladenosine synthase (512 aa).

A disordered region spans residues 1-22; sequence MVAHDAAAGVTGEGAGPPVRRA. One can recognise an MTTase N-terminal domain in the interval 25–141; that stretch reads RTYQVRTYGC…LPTLLERARH (117 aa). Residues C34, C70, C104, C178, C182, and C185 each coordinate [4Fe-4S] cluster. In terms of domain architecture, Radical SAM core spans 164-400; sequence RESAYAAWVS…IALQEQISLE (237 aa). The TRAM domain occupies 403–471; sequence RALVGQAVEV…PHHLIADAGV (69 aa).

This sequence belongs to the methylthiotransferase family. MiaB subfamily. In terms of assembly, monomer. [4Fe-4S] cluster serves as cofactor.

It is found in the cytoplasm. It carries out the reaction N(6)-dimethylallyladenosine(37) in tRNA + (sulfur carrier)-SH + AH2 + 2 S-adenosyl-L-methionine = 2-methylsulfanyl-N(6)-dimethylallyladenosine(37) in tRNA + (sulfur carrier)-H + 5'-deoxyadenosine + L-methionine + A + S-adenosyl-L-homocysteine + 2 H(+). Functionally, catalyzes the methylthiolation of N6-(dimethylallyl)adenosine (i(6)A), leading to the formation of 2-methylthio-N6-(dimethylallyl)adenosine (ms(2)i(6)A) at position 37 in tRNAs that read codons beginning with uridine. The polypeptide is tRNA-2-methylthio-N(6)-dimethylallyladenosine synthase (Mycobacterium bovis (strain ATCC BAA-935 / AF2122/97)).